The sequence spans 669 residues: NAD-dependent malic enzyme, mitochondrial (669 aa).

Residues 33 to 43 show a composition bias toward polar residues; that stretch reads IQQSRLYSSNT. A disordered region spans residues 33–68; that stretch reads IQQSRLYSSNTRSHKATTTRENTFQKPYSDEEVTKT. Arg142 is a binding site for fumarate. Tyr187 acts as the Proton donor in catalysis. The Proton acceptor role is filled by Lys259. Glu330, Asp331, and Asp354 together coordinate a divalent metal cation. NAD(+) is bound by residues Ala387 and Ala390. Positions 499 and 539 each coordinate (S)-malate.

Belongs to the malic enzymes family. It depends on Mg(2+) as a cofactor. Mn(2+) serves as cofactor.

It is found in the mitochondrion matrix. The enzyme catalyses (S)-malate + NAD(+) = pyruvate + CO2 + NADH. The catalysed reaction is oxaloacetate + H(+) = pyruvate + CO2. NAD-dependent mitochondrial malic enzyme that catalyzes the oxidative decarboxylation of malate to pyruvate. The sequence is that of NAD-dependent malic enzyme, mitochondrial (MAE1) from Saccharomyces cerevisiae (strain ATCC 204508 / S288c) (Baker's yeast).